We begin with the raw amino-acid sequence, 155 residues long: Endoribonuclease YbeY (155 aa).

3 residues coordinate Zn(2+): His114, His118, and His124.

Belongs to the endoribonuclease YbeY family. Requires Zn(2+) as cofactor.

Its subcellular location is the cytoplasm. Its function is as follows. Single strand-specific metallo-endoribonuclease involved in late-stage 70S ribosome quality control and in maturation of the 3' terminus of the 16S rRNA. The chain is Endoribonuclease YbeY from Escherichia coli O81 (strain ED1a).